The chain runs to 743 residues: 1,4-alpha-glucan branching enzyme GlgB 2 (743 aa).

A disordered region spans residues 1–23 (MSERQGGQEQRTEADGMTTEGIS). The active-site Nucleophile is Asp422. Glu475 (proton donor) is an active-site residue.

Belongs to the glycosyl hydrolase 13 family. GlgB subfamily. Monomer.

It catalyses the reaction Transfers a segment of a (1-&gt;4)-alpha-D-glucan chain to a primary hydroxy group in a similar glucan chain.. It functions in the pathway glycan biosynthesis; glycogen biosynthesis. Functionally, catalyzes the formation of the alpha-1,6-glucosidic linkages in glycogen by scission of a 1,4-alpha-linked oligosaccharide from growing alpha-1,4-glucan chains and the subsequent attachment of the oligosaccharide to the alpha-1,6 position. This is 1,4-alpha-glucan branching enzyme GlgB 2 from Xanthomonas euvesicatoria pv. vesicatoria (strain 85-10) (Xanthomonas campestris pv. vesicatoria).